Here is a 599-residue protein sequence, read N- to C-terminus: Afamin (599 aa).

A signal peptide spans 1 to 21; it reads MKLLKLTGFIFFLFFLTESLT. 3 consecutive Albumin domains span residues 22-210, 211-403, and 404-599; these read LPTQ…IPVT, QYLK…KFNE, and TTEK…KIGN. N-linked (GlcNAc...) (complex) asparagine glycosylation occurs at Asn33. Cystine bridges form between Cys77–Cys86, Cys99–Cys114, Cys113–Cys124, Cys148–Cys193, Cys192–Cys201, Cys224–Cys270, Cys269–Cys277, Cys289–Cys303, Cys302–Cys313, Cys340–Cys385, and Cys384–Cys393. A glycan (N-linked (GlcNAc...) (complex) asparagine) is linked at Asn109. The binding pocket for hydrophobic ligands stretch occupies residues 215–319; the sequence is AFSSYQKHVC…RGQCIINSNK (105 aa). The N-linked (GlcNAc...) (complex) asparagine; atypical glycan is linked to Asn383. An N-linked (GlcNAc...) (complex) asparagine glycan is attached at Asn402. Intrachain disulfides connect Cys416/Cys462, Cys461/Cys470, Cys483/Cys499, Cys498/Cys509, Cys536/Cys581, and Cys580/Cys589. N-linked (GlcNAc...) asparagine glycosylation occurs at Asn488.

It belongs to the ALB/AFP/VDB family. In terms of assembly, forms a 1:1 complex with Wnt family members; interacts with WNT1, WNT2B, WNT3, WNT3A, WNT5A, WNT7A, WNT7B, WNT8, WNT9A, WNT9B, WNT10A and WNT10B. Post-translationally, N-glycosylated; more than 90% of the glycans are sialylated. High level detected in plasma but also in extravascular fluids such as follicular and cerebrospinal fluids (at protein level).

It localises to the secreted. Functions as a carrier for hydrophobic molecules in body fluids. Essential for the solubility and activity of lipidated Wnt family members, including WNT1, WNT2B, WNT3, WNT3A, WNT5A, WNT7A, WNT7B, WNT8, WNT9A, WNT9B, WNT10A and WNT10B. Binds vitamin E. May transport vitamin E in body fluids under conditions where the lipoprotein system is not sufficient. May be involved in the transport of vitamin E across the blood-brain barrier. The sequence is that of Afamin (AFM) from Homo sapiens (Human).